The primary structure comprises 210 residues: Outer surface protein C (210 aa).

The first 18 residues, 1 to 18 (MKKNTLSAILMTLFLFIS), serve as a signal peptide directing secretion. Cys-19 carries N-palmitoyl cysteine lipidation. A lipid anchor (S-diacylglycerol cysteine) is attached at Cys-19.

Belongs to the OspC lipoprotein family. As to quaternary structure, homodimer. Binds human plasminogen on the bacterial surface, also binds human plasmin. Interacts with tick I.ricinus salivary protein Iric-1. Interacts with human complement C4 beta chain (C4B); whole bacteria bind to wells coated with C4b. Binding is inhibited by human complement factor C2.

It localises to the cell outer membrane. The protein localises to the cell surface. A major immunodominant protein in mammalian hosts. Required for the initial stages of mammalian infection. Interaction with tick I.ricinus salivary protein Salp15 protects the bacteria from antibody-mediated killing in vitro and in vivo. Inhibits macrophage-mediated phagocytosis of the bacteria. Binds human plasminogen; this probably confers an extracellular protease activity on the bacteria that allows it to traverse tissue. Binds human complement C4-B, which may inhibit the complement cascade. Experiments in mice suggest it may play another role after initial infection. This chain is Outer surface protein C, found in Borreliella burgdorferi (strain ATCC 35210 / DSM 4680 / CIP 102532 / B31) (Borrelia burgdorferi).